A 105-amino-acid chain; its full sequence is MATTKIKKGDSVKVIAGKDKGKEGKVISVSNGKVLVEGVNTITKHSKASQANPKGGIIHQEAPIDASNVMYVQKGKTTRIGFTTVDGKNGQKKVRVAKATGDIID.

Belongs to the universal ribosomal protein uL24 family. As to quaternary structure, part of the 50S ribosomal subunit.

One of two assembly initiator proteins, it binds directly to the 5'-end of the 23S rRNA, where it nucleates assembly of the 50S subunit. Functionally, one of the proteins that surrounds the polypeptide exit tunnel on the outside of the subunit. The protein is Large ribosomal subunit protein uL24 of Lachnoclostridium phytofermentans (strain ATCC 700394 / DSM 18823 / ISDg) (Clostridium phytofermentans).